We begin with the raw amino-acid sequence, 375 residues long: Probable Na(+)/H(+) antiporter GerT (375 aa).

A run of 10 helical transmembrane segments spans residues 27–47, 89–109, 112–132, 145–165, 183–203, 204–224, 226–246, 261–281, 288–308, and 350–370; these read PSVLGKLIVGIIIGPAVLGII, AGGIIFPFIGGYVTGLLFGLI, HAIFLGLLLCATSVSITVQTL, TILGAAVFDDVIVVILLAFVM, IIFFVSIVFIAWKVVPWIMKM, LVPLRVTEALISAALIICFSF, YYSEMMGIAGIIGAFAAGIAI, PIAYAIFVPVFFVSIGMEITF, LWFIIIMTLIAIFTKLIGSGL, and ENFTAIVIVVILTTIITPPLL.

Belongs to the monovalent cation:proton antiporter 2 (CPA2) transporter (TC 2.A.37) family.

It is found in the membrane. In terms of biological role, contributes to the success of spore outgrowth from the germinated state during alkaline or Na(+) stress. Does not have a significant role in germination. In Bacillus cereus, this protein is Probable Na(+)/H(+) antiporter GerT (gerT).